The following is a 357-amino-acid chain: MTVSVAVAGATGYAGSEILRLLLSHPQYRAGAMTIGALTGASHAGQSVEALMPHLVELHGRTIEKTEPARLAEHDIVFLALPHGHSAKIAQSLPDETLIIDCGADFRLADKEQWEAFYDSPYAGSWPYGIPEMPGHRKKIASTRRIAVPGCFPTGATLAVLPALTSKLITPEISIVSVTGVSGAGKKPSVGMLGSETMGSARAYKAGGKHRHTPEIIQNLQEACDEPVQVSFTPVLAPMQRGILTTASAPASDELVALTEKDPSAAQDAVKAAYRSFYSDEKFVVVLNGDQQPATQSVLGSNAVHIQAEYDVAARRVVVTSAIDNLVKGTAGAAIQCMNLAQGWPEDSGLSINGVAP.

The active site involves C151.

This sequence belongs to the NAGSA dehydrogenase family. Type 1 subfamily.

Its subcellular location is the cytoplasm. It catalyses the reaction N-acetyl-L-glutamate 5-semialdehyde + phosphate + NADP(+) = N-acetyl-L-glutamyl 5-phosphate + NADPH + H(+). The protein operates within amino-acid biosynthesis; L-arginine biosynthesis; N(2)-acetyl-L-ornithine from L-glutamate: step 3/4. Its function is as follows. Catalyzes the NADPH-dependent reduction of N-acetyl-5-glutamyl phosphate to yield N-acetyl-L-glutamate 5-semialdehyde. In Corynebacterium kroppenstedtii (strain DSM 44385 / JCM 11950 / CIP 105744 / CCUG 35717), this protein is N-acetyl-gamma-glutamyl-phosphate reductase.